A 1481-amino-acid chain; its full sequence is Cystic fibrosis transmembrane conductance regulator (1481 aa).

Topologically, residues 1–77 (MQRSPLEKAS…KLINALRRCF (77 aa)) are cytoplasmic. A helical membrane pass occupies residues 78–98 (FWRFMFYGIILYLGEVTKAVQ). An ABC transmembrane type-1 1 domain is found at 81–365 (FMFYGIILYL…WAVQTWYDSL (285 aa)). Over 99 to 122 (PLLLGRIIASYDPDNEAERSIAIY) the chain is Extracellular. Residues 123–146 (LGIGLCLLFIVRTLLLHPAIFGLH) form a helical membrane-spanning segment. The Cytoplasmic segment spans residues 147-195 (HIGMQMRIAMFSLIYKKTLKLSSRVLDKISIGQLVSLLSNNLNKFDEGL). A helical membrane pass occupies residues 196–216 (ALAHFVWIAPLQVTLLMGLLW). Topologically, residues 217–222 (DLLQAS) are extracellular. A helical transmembrane segment spans residues 223 to 243 (AFCGLAFLIVLALFQAGLGRM). The Cytoplasmic portion of the chain corresponds to 244 to 298 (MMKYRDQRAGKINERLVITSEMIENIQSVKAYCWEEAMEKMIENLRQTELKLTRK). Residues 299 to 319 (AAYVRYFNSSAFFFSGFFVVF) traverse the membrane as a helical segment. Over 320-339 (LSVLPYALIKGIVLRRIFTT) the chain is Extracellular. A helical membrane pass occupies residues 340-358 (ISFCIVLRMAVTRQFPWAV). At 359–858 (QTWYDSLGAI…YLRYITIHKS (500 aa)) the chain is on the cytoplasmic side. Residues tryptophan 401, serine 433, 457 to 464 (GSTGAGKT), and glutamine 492 contribute to the ATP site. In terms of domain architecture, ABC transporter 1 spans 422-645 (NGDNSLFFSN…RPDFSSKLMG (224 aa)). Residue cysteine 523 is the site of S-palmitoyl cysteine attachment. Serine 548 and serine 659 each carry phosphoserine. The interval 653-831 (SAERRNSILT…EEINEDDLKE (179 aa)) is disordered R region. Serine 669 carries the post-translational modification Phosphoserine; by PKA. Serine 685 carries the phosphoserine modification. Residue lysine 687 forms a Glycyl lysine isopeptide (Lys-Gly) (interchain with G-Cter in ubiquitin) linkage. Phosphoserine occurs at positions 699 and 711. Residue threonine 716 is modified to Phosphothreonine. 5 positions are modified to phosphoserine: serine 736, serine 767, serine 790, serine 795, and serine 813. A helical membrane pass occupies residues 859 to 879 (LIFVLIWCLVIFLAEVAASLV). Residues 859–1155 (LIFVLIWCLV…AVNSSIDVDS (297 aa)) form the ABC transmembrane type-1 2 domain. Topologically, residues 880 to 918 (VLWLLKETPPQDSGNSTKGANNSYAVIITSTSSYYVFYI) are extracellular. N-linked (GlcNAc...) asparagine glycans are attached at residues asparagine 894 and asparagine 900. A discontinuously helical membrane pass occupies residues 919 to 939 (YVGVADTLLALGLFRGLPLVH). The Cytoplasmic portion of the chain corresponds to 940-990 (TLITVSKILHHKMLHSVLQAPMSTLNTLKAGGILNRFSKDMAILDDLLPLT). The chain crosses the membrane as a helical span at residues 991-1011 (IFDFIQLLLIVIGAVAVVSVL). Topologically, residues 1012 to 1013 (QP) are extracellular. Residues 1014–1034 (YIFLATVPVIAAFIILRAYFL) form a helical membrane-spanning segment. Topologically, residues 1035 to 1095 (HTSQQLKQLE…TANWFLYLST (61 aa)) are cytoplasmic. A helical transmembrane segment spans residues 1096–1116 (LRWFQMRIEMIFVIFFIAVTF). Topologically, residues 1117–1130 (ISILTTGEGEGTVG) are extracellular. Residues 1131-1151 (IILTLAMNIMSTLQWAVNSSI) traverse the membrane as a helical segment. The Cytoplasmic segment spans residues 1152-1481 (DVDSLMRSVS…TEEEVQETRL (330 aa)). One can recognise an ABC transporter 2 domain in the interval 1211 to 1444 (MTVKDLTAKY…KSLFQQAISS (234 aa)). ATP-binding positions include tyrosine 1220 and 1245–1252 (GRTGSGKS). An interaction with GORASP2 region spans residues 1387-1481 (RTLKQAFADC…TEEEVQETRL (95 aa)). Cysteine 1396 is lipidated: S-palmitoyl cysteine. Phosphoserine is present on residues serine 1445 and serine 1457. A disordered region spans residues 1449–1481 (KLFPHRNSSKHKSRSKIAALQEETEEEVQETRL). A compositionally biased stretch (basic residues) spans 1451 to 1463 (FPHRNSSKHKSRS). Positions 1470–1481 (EETEEEVQETRL) are enriched in acidic residues. The short motif at 1479–1481 (TRL) is the PDZ-binding element.

Belongs to the ABC transporter superfamily. ABCC family. CFTR transporter (TC 3.A.1.202) subfamily. Monomer; does not require oligomerization for channel activity. May form oligomers in the membrane. Interacts with SLC26A3, SLC26A6 and NHERF1. Interacts with SHANK2. Interacts with MYO6. Interacts (via C-terminus) with GOPC (via PDZ domain); this promotes CFTR internalization and thereby decreases channel activity. Interacts with SLC4A7 through NHERF1. Found in a complex with MYO5B and RAB11A. Interacts with ANO1. Interacts with SLC26A8. Interacts with AHCYL1; the interaction increases CFTR activity. Interacts with CSE1L. The core-glycosylated form interacts with GORASP2 (via PDZ GRASP-type 1 domain) in respone to ER stress. Interacts with MARCHF2; the interaction leads to CFTR ubiqtuitination and degradation. Interacts with ADGRG2. In terms of processing, N-glycosylated. Post-translationally, phosphorylated; cAMP treatment promotes phosphorylation and activates the channel. Dephosphorylation decreases the ATPase activity (in vitro). Phosphorylation at PKA sites activates the channel. Phosphorylation at PKC sites enhances the response to phosphorylation by PKA. Phosphorylated by AMPK; this inhibits channel activity. Ubiquitinated, leading to its degradation in the lysosome. Deubiquitination by USP10 in early endosomes enhances its endocytic recycling to the cell membrane. Ubiquitinated by RNF185 during ER stress. Ubiquitinated by MARCHF2.

Its subcellular location is the apical cell membrane. The protein resides in the early endosome membrane. It is found in the cell membrane. It localises to the recycling endosome membrane. The protein localises to the endoplasmic reticulum membrane. Its subcellular location is the nucleus. It catalyses the reaction ATP + H2O + closed Cl(-) channel = ADP + phosphate + open Cl(-) channel.. The enzyme catalyses chloride(in) = chloride(out). It carries out the reaction hydrogencarbonate(in) = hydrogencarbonate(out). The catalysed reaction is ATP + H2O = ADP + phosphate + H(+). In terms of biological role, epithelial ion channel that plays an important role in the regulation of epithelial ion and water transport and fluid homeostasis. Mediates the transport of chloride ions across the cell membrane. Possesses an intrinsic ATPase activity and utilizes ATP to gate its channel; the passive flow of anions through the channel is gated by cycles of ATP binding and hydrolysis by the ATP-binding domains. The ion channel is also permeable to HCO(3)(-); selectivity depends on the extracellular chloride concentration. Exerts its function also by modulating the activity of other ion channels and transporters. Contributes to the regulation of the pH and the ion content of the epithelial fluid layer. Modulates the activity of the epithelial sodium channel (ENaC) complex, in part by regulating the cell surface expression of the ENaC complex. May regulate bicarbonate secretion and salvage in epithelial cells by regulating the transporter SLC4A7. Can inhibit the chloride channel activity of ANO1. Plays a role in the chloride and bicarbonate homeostasis during sperm epididymal maturation and capacitation. The protein is Cystic fibrosis transmembrane conductance regulator of Equus caballus (Horse).